Reading from the N-terminus, the 406-residue chain is Cysteine desulfurase (406 aa).

At lysine 226 the chain carries N6-(pyridoxal phosphate)lysine. Cysteine 364 (cysteine persulfide intermediate) is an active-site residue.

Belongs to the class-V pyridoxal-phosphate-dependent aminotransferase family. Csd subfamily. As to quaternary structure, homodimer. Interacts with SufE and the SufBCD complex composed of SufB, SufC and SufD. The interaction with SufE is required to mediate the direct transfer of the sulfur atom from the S-sulfanylcysteine. The cofactor is pyridoxal 5'-phosphate.

It is found in the cytoplasm. It catalyses the reaction (sulfur carrier)-H + L-cysteine = (sulfur carrier)-SH + L-alanine. It carries out the reaction L-selenocysteine + AH2 = hydrogenselenide + L-alanine + A + H(+). Its pathway is cofactor biosynthesis; iron-sulfur cluster biosynthesis. Its function is as follows. Cysteine desulfurases mobilize the sulfur from L-cysteine to yield L-alanine, an essential step in sulfur metabolism for biosynthesis of a variety of sulfur-containing biomolecules. Component of the suf operon, which is activated and required under specific conditions such as oxidative stress and iron limitation. Acts as a potent selenocysteine lyase in vitro, that mobilizes selenium from L-selenocysteine. Selenocysteine lyase activity is however unsure in vivo. The chain is Cysteine desulfurase from Escherichia coli O6:K15:H31 (strain 536 / UPEC).